A 743-amino-acid chain; its full sequence is Mitochondrial exoribonuclease DSS-1 (743 aa).

Residues 1-67 (MTPRRVAKLV…KELLHLQRSL (67 aa)) constitute a mitochondrion transit peptide. The RNB domain occupies 186–542 (THNPAYAIDS…VHHQLKVWLW (357 aa)). The interval 320-357 (VGNQHHHTERESTQASPAKREEGKKGMVASGGTSSCRP) is disordered. Basic and acidic residues predominate over residues 325 to 344 (HHTERESTQASPAKREEGKK).

This sequence belongs to the RNR ribonuclease family. Component of the mitochondrial 3' processome (MPsome) complex composed at least of terminal uridylyltransferase KRET1/TUT1, 3'-5' exonuclease DSS1, MPSS1, MPSS2 and MPSS3. Within the complex, interacts with KRET1 and MPSS2. Component of the mitochondrial degradosome complex composed at least of 3'-5' exonuclease DSS1 and helicase SUV3. Within the complex, interacts with helicase SUV3.

The protein localises to the mitochondrion. It catalyses the reaction Exonucleolytic cleavage in the 3'- to 5'-direction to yield nucleoside 5'-phosphates.. 3'-5'exoribonuclease which is involved in the post-transcriptional processing, editing and degradation of mitochondrial RNAs, including mRNAs, rRNAs and guided RNAs (gRNA). As part of the mitochondrial 3' processome (MPsome), involved in the maturation of guided RNA (gRNA) precursors by catalyzing the processive 3'-5' degradation of uridylated gRNA precursors. Plays a role in the degradation of 12S rRNA processing intermediates and maturation by-products. This Trypanosoma brucei brucei protein is Mitochondrial exoribonuclease DSS-1.